The chain runs to 206 residues: Large ribosomal subunit protein uL3 (206 aa).

The protein belongs to the universal ribosomal protein uL3 family. As to quaternary structure, part of the 50S ribosomal subunit. Forms a cluster with proteins L14 and L19.

One of the primary rRNA binding proteins, it binds directly near the 3'-end of the 23S rRNA, where it nucleates assembly of the 50S subunit. The protein is Large ribosomal subunit protein uL3 of Cytophaga hutchinsonii (strain ATCC 33406 / DSM 1761 / CIP 103989 / NBRC 15051 / NCIMB 9469 / D465).